We begin with the raw amino-acid sequence, 571 residues long: DDB1- and CUL4-associated factor 11 homolog (571 aa).

The disordered stretch occupies residues 51–75 (RMKPNHSNDSDTDFSSDDEGCPKMT). Positions 60–69 (SDTDFSSDDE) are enriched in acidic residues. WD repeat units lie at residues 162–201 (RVAT…SKYR), 266–305 (RDHC…RIRT), 309–349 (AHED…DGDV), 357–396 (GHRD…NMSG), 435–479 (GHSV…VSRR), and 482–521 (GHTA…EGVI).

This sequence belongs to the WD repeat LEC14B family.

In terms of biological role, involved in regulation of lifespan. Required for dopaminergic CEP neuron degeneration in response to Mn(2+). Inhibits the skn-1-mediated up-regulation of tatn-1. This is DDB1- and CUL4-associated factor 11 homolog from Caenorhabditis elegans.